Reading from the N-terminus, the 489-residue chain is 5'-AMP-activated protein kinase subunit gamma-3 (489 aa).

A disordered region spans residues 1 to 113 (MEPGLEHALR…PAGVGTPPTG (113 aa)). Residues 34–46 (SSSWPSPAVTSSS) show a composition bias toward low complexity. The segment covering 50–62 (RGKRRAKALRWTR) has biased composition (basic residues). CBS domains lie at 197–258 (MATS…RSPL), 280–340 (CFKP…LLPR), and 355–415 (TFRD…HLDM). ADP contacts are provided by residues Arg225, 240–245 (MLTITD), Val285, 306–307 (HR), and Lys325. AMP-binding positions include Arg225, 240-245 (MLTITD), Val285, His306, 306-307 (HR), Lys325, Thr355, Ala360, 381-382 (SA), 397-400 (SRFD), Arg424, Leu432, His453, 453-454 (HR), and 469-472 (SLSD). ATP-binding positions include Arg225, 240–245 (MLTITD), Val285, 306–307 (HR), Arg307, and Lys325. An AMPK pseudosubstrate motif is present at residues 293-314 (LFEAVYTLIKNRIHRLPVLDPV). Residues 397–400 (SRFD), Arg424, Leu432, and 453–454 (HR) each bind ADP. ATP-binding positions include 397-400 (SRFD), Arg424, Leu432, and 453-454 (HR). A CBS 4 domain is found at 427 to 486 (CLEGVLSCQPHESLGEVIDRIAREQVHRLVLVDETQHLLGVVSLSDILQALVLSPAGIDA).

Belongs to the 5'-AMP-activated protein kinase gamma subunit family. In terms of assembly, AMPK is a heterotrimer of an alpha catalytic subunit (PRKAA1 or PRKAA2), a beta (PRKAB1 or PRKAB2) and a gamma non-catalytic subunits (PRKAG1, PRKAG2 or PRKAG3). Interacts with FNIP1 and FNIP2. Post-translationally, phosphorylated by ULK1; leading to negatively regulate AMPK activity and suggesting the existence of a regulatory feedback loop between ULK1 and AMPK. Glycosylated; O-GlcNAcylated by OGT, promoting the AMP-activated protein kinase (AMPK) activity. As to expression, skeletal muscle, with weak expression in heart and pancreas.

AMP/ATP-binding subunit of AMP-activated protein kinase (AMPK), an energy sensor protein kinase that plays a key role in regulating cellular energy metabolism. In response to reduction of intracellular ATP levels, AMPK activates energy-producing pathways and inhibits energy-consuming processes: inhibits protein, carbohydrate and lipid biosynthesis, as well as cell growth and proliferation. AMPK acts via direct phosphorylation of metabolic enzymes, and by longer-term effects via phosphorylation of transcription regulators. AMPK also acts as a regulator of cellular polarity by remodeling the actin cytoskeleton; probably by indirectly activating myosin. The AMPK gamma3 subunit is a non-catalytic subunit with a regulatory role in muscle energy metabolism. It mediates binding to AMP, ADP and ATP, leading to AMPK activation or inhibition: AMP-binding results in allosteric activation of alpha catalytic subunit (PRKAA1 or PRKAA2) both by inducing phosphorylation and preventing dephosphorylation of catalytic subunits. ADP also stimulates phosphorylation, without stimulating already phosphorylated catalytic subunit. ATP promotes dephosphorylation of catalytic subunit, rendering the AMPK enzyme inactive. This chain is 5'-AMP-activated protein kinase subunit gamma-3 (PRKAG3), found in Homo sapiens (Human).